Here is a 348-residue protein sequence, read N- to C-terminus: Probable tRNA pseudouridine synthase B (348 aa).

The active-site Nucleophile is Asp93. The PUA domain maps to 260-335; sequence LKKIYILDSA…IAVDIERVFM (76 aa).

The protein belongs to the pseudouridine synthase TruB family. Type 2 subfamily.

It carries out the reaction uridine(55) in tRNA = pseudouridine(55) in tRNA. Could be responsible for synthesis of pseudouridine from uracil-55 in the psi GC loop of transfer RNAs. This Nanoarchaeum equitans (strain Kin4-M) protein is Probable tRNA pseudouridine synthase B.